The primary structure comprises 303 residues: Mycothiol acetyltransferase (303 aa).

N-acetyltransferase domains follow at residues 3–152 and 155–303; these read VTVT…VSLP and VRIR…MYRS. Asp35 serves as a coordination point for 1D-myo-inositol 2-(L-cysteinylamino)-2-deoxy-alpha-D-glucopyranoside. 79–81 lines the acetyl-CoA pocket; it reads LTV. 1D-myo-inositol 2-(L-cysteinylamino)-2-deoxy-alpha-D-glucopyranoside is bound by residues Glu182, Lys224, and Glu237. Acetyl-CoA-binding positions include 241-243 and 248-254; these read VGV and QGSGLGR. Tyr275 contacts 1D-myo-inositol 2-(L-cysteinylamino)-2-deoxy-alpha-D-glucopyranoside.

It belongs to the acetyltransferase family. MshD subfamily. As to quaternary structure, monomer.

It catalyses the reaction 1D-myo-inositol 2-(L-cysteinylamino)-2-deoxy-alpha-D-glucopyranoside + acetyl-CoA = mycothiol + CoA + H(+). Functionally, catalyzes the transfer of acetyl from acetyl-CoA to desacetylmycothiol (Cys-GlcN-Ins) to form mycothiol. The protein is Mycothiol acetyltransferase of Kocuria rhizophila (strain ATCC 9341 / DSM 348 / NBRC 103217 / DC2201).